The chain runs to 88 residues: Histone H2A-beta, sperm (88 aa).

The protein belongs to the histone H2A family. In terms of assembly, the nucleosome is a histone octamer containing two molecules each of H2A, H2B, H3 and H4 assembled in one H3-H4 heterotetramer and two H2A-H2B heterodimers. The octamer wraps approximately 147 bp of DNA. Post-translationally, monoubiquitination in C-terminus gives a specific tag for epigenetic transcriptional repression.

The protein localises to the nucleus. The protein resides in the chromosome. Functionally, core component of nucleosome. Nucleosomes wrap and compact DNA into chromatin, limiting DNA accessibility to the cellular machineries which require DNA as a template. Histones thereby play a central role in transcription regulation, DNA repair, DNA replication and chromosomal stability. DNA accessibility is regulated via a complex set of post-translational modifications of histones, also called histone code, and nucleosome remodeling. The sequence is that of Histone H2A-beta, sperm from Strongylocentrotus purpuratus (Purple sea urchin).